A 324-amino-acid polypeptide reads, in one-letter code: Phospho-N-acetylmuramoyl-pentapeptide-transferase (324 aa).

Helical transmembrane passes span 9–29 (TFAV…PFLV), 53–73 (TMGA…FSFI), 77–97 (VSAA…LGFL), 117–137 (FLGQ…NGFA), 147–167 (IEVD…VGFS), 176–196 (LDGL…VIAF), 201–221 (MDVA…LLFN), 227–247 (IFMG…ISIL), 253–273 (LLLL…LQVF), and 304–324 (VLTF…VVIF).

Belongs to the glycosyltransferase 4 family. MraY subfamily. Mg(2+) serves as cofactor.

The protein localises to the cell membrane. The enzyme catalyses UDP-N-acetyl-alpha-D-muramoyl-L-alanyl-gamma-D-glutamyl-meso-2,6-diaminopimeloyl-D-alanyl-D-alanine + di-trans,octa-cis-undecaprenyl phosphate = di-trans,octa-cis-undecaprenyl diphospho-N-acetyl-alpha-D-muramoyl-L-alanyl-D-glutamyl-meso-2,6-diaminopimeloyl-D-alanyl-D-alanine + UMP. It functions in the pathway cell wall biogenesis; peptidoglycan biosynthesis. Catalyzes the initial step of the lipid cycle reactions in the biosynthesis of the cell wall peptidoglycan: transfers peptidoglycan precursor phospho-MurNAc-pentapeptide from UDP-MurNAc-pentapeptide onto the lipid carrier undecaprenyl phosphate, yielding undecaprenyl-pyrophosphoryl-MurNAc-pentapeptide, known as lipid I. This chain is Phospho-N-acetylmuramoyl-pentapeptide-transferase, found in Listeria monocytogenes serotype 4b (strain CLIP80459).